The primary structure comprises 945 residues: Kinesin-like protein KIN-7F (945 aa).

The Kinesin motor domain occupies 34-356; the sequence is RILVSVRLRP…LLFASCAKEV (323 aa). Residue 120 to 127 coordinates ATP; that stretch reads GQTSSGKT. Residues 365–437 adopt a coiled-coil conformation; it reads VMSDKALVKQ…QDLLQVVGDN (73 aa). Disordered stretches follow at residues 484–512 and 553–588; these read RRVAQREHKPQQAENNVQFTTPSRYSVSS and NECLESSAVGSNSLQDPNAGSSMHINNDSNSSMNSR. Composition is skewed to polar residues over residues 495-512 and 560-587; these read QAENNVQFTTPSRYSVSS and AVGSNSLQDPNAGSSMHINNDSNSSMNS.

This sequence belongs to the TRAFAC class myosin-kinesin ATPase superfamily. Kinesin family. KIN-7 subfamily. Binds microtubules.

In terms of biological role, binds ATP/ADP in vitro. Possesses low ATPase activity but high affinity for microtubules. This Oryza sativa subsp. japonica (Rice) protein is Kinesin-like protein KIN-7F.